Reading from the N-terminus, the 155-residue chain is Ribonuclease H (155 aa).

The 142-residue stretch at Met-1–Met-142 folds into the RNase H type-1 domain. Positions 10, 48, 70, and 134 each coordinate Mg(2+).

This sequence belongs to the RNase H family. Monomer. Mg(2+) is required as a cofactor.

The protein resides in the cytoplasm. The enzyme catalyses Endonucleolytic cleavage to 5'-phosphomonoester.. Endonuclease that specifically degrades the RNA of RNA-DNA hybrids. In Escherichia fergusonii (strain ATCC 35469 / DSM 13698 / CCUG 18766 / IAM 14443 / JCM 21226 / LMG 7866 / NBRC 102419 / NCTC 12128 / CDC 0568-73), this protein is Ribonuclease H.